The following is a 923-amino-acid chain: DNA mismatch repair protein MutS (923 aa).

Residue 671-678 (GPNMAGKS) coordinates ATP.

This sequence belongs to the DNA mismatch repair MutS family.

This protein is involved in the repair of mismatches in DNA. It is possible that it carries out the mismatch recognition step. This protein has a weak ATPase activity. This is DNA mismatch repair protein MutS from Rhodopseudomonas palustris (strain BisB5).